The chain runs to 299 residues: RING-H2 finger protein ATL20 (299 aa).

A helical transmembrane segment spans residues 172–192 (LIITLCIIGGITATCIAAIRI). An RING-type; atypical zinc finger spans residues 253–295 (CPICLSEYASKETVRCMPECDHCFHVQCIDEWLKIHSSCPVCR).

Belongs to the RING-type zinc finger family. ATL subfamily.

It localises to the membrane. It carries out the reaction S-ubiquitinyl-[E2 ubiquitin-conjugating enzyme]-L-cysteine + [acceptor protein]-L-lysine = [E2 ubiquitin-conjugating enzyme]-L-cysteine + N(6)-ubiquitinyl-[acceptor protein]-L-lysine.. It participates in protein modification; protein ubiquitination. In Arabidopsis thaliana (Mouse-ear cress), this protein is RING-H2 finger protein ATL20 (ATL20).